The chain runs to 251 residues: tRNA-cytidine(32) 2-sulfurtransferase 2 (251 aa).

The PP-loop motif motif lies at 33 to 38; the sequence is SGGKDS. Cys108, Cys111, and Cys199 together coordinate [4Fe-4S] cluster.

This sequence belongs to the TtcA family. Homodimer. Mg(2+) is required as a cofactor. The cofactor is [4Fe-4S] cluster.

Its subcellular location is the cytoplasm. It carries out the reaction cytidine(32) in tRNA + S-sulfanyl-L-cysteinyl-[cysteine desulfurase] + AH2 + ATP = 2-thiocytidine(32) in tRNA + L-cysteinyl-[cysteine desulfurase] + A + AMP + diphosphate + H(+). It participates in tRNA modification. Functionally, catalyzes the ATP-dependent 2-thiolation of cytidine in position 32 of tRNA, to form 2-thiocytidine (s(2)C32). The sulfur atoms are provided by the cysteine/cysteine desulfurase (IscS) system. The sequence is that of tRNA-cytidine(32) 2-sulfurtransferase 2 from Francisella tularensis subsp. tularensis (strain FSC 198).